A 102-amino-acid chain; its full sequence is Protein iss (102 aa).

Its function is as follows. Increases serum survival and confers group II surface exclusion. This is Protein iss (iss) from Escherichia coli.